Here is a 199-residue protein sequence, read N- to C-terminus: Protein GrpE (199 aa).

Positions 1–10 (MTNQTEKEQV) are enriched in basic and acidic residues. Residues 1 to 44 (MTNQTEKEQVEQDVSQATELAQEAQEAQTQDVEPELQQNNEIDP) are disordered. The segment covering 16–30 (QATELAQEAQEAQTQ) has biased composition (low complexity).

This sequence belongs to the GrpE family. In terms of assembly, homodimer.

It is found in the cytoplasm. Participates actively in the response to hyperosmotic and heat shock by preventing the aggregation of stress-denatured proteins, in association with DnaK and GrpE. It is the nucleotide exchange factor for DnaK and may function as a thermosensor. Unfolded proteins bind initially to DnaJ; upon interaction with the DnaJ-bound protein, DnaK hydrolyzes its bound ATP, resulting in the formation of a stable complex. GrpE releases ADP from DnaK; ATP binding to DnaK triggers the release of the substrate protein, thus completing the reaction cycle. Several rounds of ATP-dependent interactions between DnaJ, DnaK and GrpE are required for fully efficient folding. In Glaesserella parasuis serovar 5 (strain SH0165) (Haemophilus parasuis), this protein is Protein GrpE.